The following is a 298-amino-acid chain: tRNA-uridine aminocarboxypropyltransferase 2 (298 aa).

Met-1 carries the N-acetylmethionine modification. Positions 1–10 (MEPQAEERTL) are enriched in basic and acidic residues. The tract at residues 1-55 (MEPQAEERTLGEPAPPPSGALASPTPDEEERTEGGAPPTATPAGASGDSTSADGL) is disordered. A compositionally biased stretch (low complexity) spans 34–45 (GGAPPTATPAGA). Ser-132 carries the post-translational modification Phosphoserine. The DXTW signature appears at 178-181 (DGTW).

It belongs to the TDD superfamily. DTWD2 family.

It is found in the nucleus. The protein resides in the cytoplasm. The catalysed reaction is a uridine in tRNA + S-adenosyl-L-methionine = a 3-[(3S)-3-amino-3-carboxypropyl]uridine in tRNA + S-methyl-5'-thioadenosine + H(+). In terms of biological role, catalyzes the formation of 3-(3-amino-3-carboxypropyl)uridine (acp3U) at position 20a in the D-loop of several cytoplasmic tRNAs (acp3U(20a)). Also has a weak activity to form acp3U at position 20 in the D-loop of tRNAs (acp3U(20)). Involved in glycoRNA biosynthesis by mediating formation of acp3U, which acts as an attachment site for N-glycans on tRNAs. GlycoRNAs consist of RNAs modified with secretory N-glycans that are presented on the cell surface. The polypeptide is tRNA-uridine aminocarboxypropyltransferase 2 (Mus musculus (Mouse)).